Here is a 188-residue protein sequence, read N- to C-terminus: Probable RNA 2'-phosphotransferase (188 aa).

Belongs to the KptA/TPT1 family.

Functionally, removes the 2'-phosphate from RNA via an intermediate in which the phosphate is ADP-ribosylated by NAD followed by a presumed transesterification to release the RNA and generate ADP-ribose 1''-2''-cyclic phosphate (APPR&gt;P). May function as an ADP-ribosylase. This is Probable RNA 2'-phosphotransferase from Lacticaseibacillus paracasei (strain ATCC 334 / BCRC 17002 / CCUG 31169 / CIP 107868 / KCTC 3260 / NRRL B-441) (Lactobacillus paracasei).